The primary structure comprises 1140 residues: Centrosomal protein of 135 kDa (1140 aa).

The interval 11–64 (NIRKRLDQLGYRQTLTVECLPLVEKLFSDLVHTTESLRQSKLSAVKAEKESANF) is homodimerization. Coiled coils occupy residues 75–151 (NARL…KNLH) and 199–416 (LQVA…FAVT). Phosphoserine is present on residues S383 and S439. Coiled-coil stretches lie at residues 447–644 (LKGI…LENK), 668–1036 (SLRI…LESL), and 1079–1113 (NTMLRAKVAQLQTDYDALKRQISTERYERERAIQE). A Phosphoserine modification is found at S688. The tract at residues 1114–1140 (MRRHGLATPPLSSTLRSPSHSPEHRNV) is disordered. T1121 is modified (phosphothreonine). Over residues 1121–1133 (TPPLSSTLRSPSH) the composition is skewed to low complexity. Residue S1130 is modified to Phosphoserine.

Belongs to the CEP135/TSGA10 family. As to quaternary structure, homodimer. Interacts with DCTN2. Interacts with CEP250.

Its subcellular location is the cytoplasm. The protein localises to the cytoskeleton. It localises to the microtubule organizing center. It is found in the centrosome. The protein resides in the centriole. In terms of biological role, centrosomal microtubule-binding protein involved in centriole biogenesis. Acts as a scaffolding protein during early centriole biogenesis. Required for the targeting of centriole satellite proteins to centrosomes such as of PCM1, SSX2IP and CEP290 and recruitment of WRAP73 to centrioles. Also required for centriole-centriole cohesion during interphase by acting as a platform protein for CEP250 at the centriole. Required for the recruitment of CEP295 to the proximal end of new-born centrioles at the centriolar microtubule wall during early S phase in a PLK4-dependent manner. The chain is Centrosomal protein of 135 kDa from Homo sapiens (Human).